Reading from the N-terminus, the 942-residue chain is Isoleucine--tRNA ligase (942 aa).

A 'HIGH' region motif is present at residues 58 to 68 (PYANGDIHLGH). Glu-567 provides a ligand contact to L-isoleucyl-5'-AMP. Residues 608–612 (KMSKS) carry the 'KMSKS' region motif. Lys-611 is an ATP binding site. Cys-905, Cys-908, Cys-925, and Cys-928 together coordinate Zn(2+).

It belongs to the class-I aminoacyl-tRNA synthetase family. IleS type 1 subfamily. Monomer. The cofactor is Zn(2+).

The protein resides in the cytoplasm. The enzyme catalyses tRNA(Ile) + L-isoleucine + ATP = L-isoleucyl-tRNA(Ile) + AMP + diphosphate. Functionally, catalyzes the attachment of isoleucine to tRNA(Ile). As IleRS can inadvertently accommodate and process structurally similar amino acids such as valine, to avoid such errors it has two additional distinct tRNA(Ile)-dependent editing activities. One activity is designated as 'pretransfer' editing and involves the hydrolysis of activated Val-AMP. The other activity is designated 'posttransfer' editing and involves deacylation of mischarged Val-tRNA(Ile). In Pseudoalteromonas translucida (strain TAC 125), this protein is Isoleucine--tRNA ligase.